Reading from the N-terminus, the 235-residue chain is Octanoyltransferase (235 aa).

A BPL/LPL catalytic domain is found at 44–231; that stretch reads DTTADELWLV…HQVGLPNENN (188 aa). Substrate contacts are provided by residues 83-90, 150-152, and 163-165; these read RGGQVTYH, SLG, and GLA. Catalysis depends on cysteine 181, which acts as the Acyl-thioester intermediate.

Belongs to the LipB family.

It is found in the cytoplasm. The catalysed reaction is octanoyl-[ACP] + L-lysyl-[protein] = N(6)-octanoyl-L-lysyl-[protein] + holo-[ACP] + H(+). It participates in protein modification; protein lipoylation via endogenous pathway; protein N(6)-(lipoyl)lysine from octanoyl-[acyl-carrier-protein]: step 1/2. In terms of biological role, catalyzes the transfer of endogenously produced octanoic acid from octanoyl-acyl-carrier-protein onto the lipoyl domains of lipoate-dependent enzymes. Lipoyl-ACP can also act as a substrate although octanoyl-ACP is likely to be the physiological substrate. In Colwellia psychrerythraea (strain 34H / ATCC BAA-681) (Vibrio psychroerythus), this protein is Octanoyltransferase.